The sequence spans 489 residues: Amino acid transporter AVT6E (489 aa).

The next 11 helical transmembrane spans lie at 76–96, 102–122, 156–176, 201–221, 227–247, 269–289, 310–330, 357–377, 404–424, 425–445, and 461–481; these read GIYG…IMAL, VLGL…SEIS, ICII…MGDV, VLIL…NKID, SAAS…VATI, ILDL…HFNV, ITTA…YLLF, IVRI…HFSL, VVLL…WTAF, KFTG…LIAL, and VSWL…IGNI.

Belongs to the amino acid/polyamine transporter 2 family. Amino acid/auxin permease (AAAP) (TC 2.A.18.6) subfamily.

It is found in the endoplasmic reticulum membrane. Its subcellular location is the vacuole membrane. This is Amino acid transporter AVT6E from Arabidopsis thaliana (Mouse-ear cress).